We begin with the raw amino-acid sequence, 506 residues long: Zinc finger protein MAGPIE (506 aa).

A disordered region spans residues 1–53 (MTTEDQTISSSGGYVQSSSTTDHVDHHHHDQHESLNPPLVKKKRNLPGNPDPE). Residues 9–21 (SSSGGYVQSSSTT) are compositionally biased toward low complexity. Residues 22-33 (DHVDHHHHDQHE) are compositionally biased toward basic and acidic residues. S60 bears the Phosphoserine mark. 2 C2H2-type zinc fingers span residues 70–92 (FLCE…RRGH) and 111–141 (YVCP…CRKH). Positions 133–140 (IKKHFCRK) match the Nuclear localization signal motif. Residues 146–169 (WKCEKCAKRYAVQSDWKAHSKTCG) form a C2H2-type 2; degenerate zinc finger. Residues C148, C151, H164, C168, C175, C177, H190, and C194 each coordinate Zn(2+). A CCHC-type 2; atypical zinc finger spans residues 173 to 196 (YRCDCGTIFSRRDSFITHRAFCDA). The tract at residues 183 to 195 (RRDSFITHRAFCD) is SHR-binding.

Interacts with SHR, SCR and JKD, but not with itself. Interacts with SIEL. Binds to RGA and SCL3 competitively in the nucleus. Expressed in the ground tissue and stele cells of embryos and 2-days post-germination roots but not in the quiescent center. Detected only in cells that perform asymmetric cell divisions. In roots, present in cortex, endodermis, and pericycle layer.

Its subcellular location is the nucleus. In terms of biological role, transcription factor that regulates tissue boundaries and asymmetric cell division. Contributes to the sequestration of 'SHORT-ROOT' to the nucleus. Interacts with the SCR and MGP promoters. Does not show transcription activity by itself, but regulates the transcription of downstream genes through interaction with other transcription factors. Binds DNA via its zinc fingers. Recognizes and binds to SCL3 promoter sequence 5'-AGACAA-3' to promote its expression when in complex with RGA. Positively involved in gibberellic acid (GA) signaling. This Arabidopsis thaliana (Mouse-ear cress) protein is Zinc finger protein MAGPIE.